Here is a 235-residue protein sequence, read N- to C-terminus: 2-C-methyl-D-erythritol 4-phosphate cytidylyltransferase (235 aa).

It belongs to the IspD/TarI cytidylyltransferase family. IspD subfamily.

It catalyses the reaction 2-C-methyl-D-erythritol 4-phosphate + CTP + H(+) = 4-CDP-2-C-methyl-D-erythritol + diphosphate. The protein operates within isoprenoid biosynthesis; isopentenyl diphosphate biosynthesis via DXP pathway; isopentenyl diphosphate from 1-deoxy-D-xylulose 5-phosphate: step 2/6. In terms of biological role, catalyzes the formation of 4-diphosphocytidyl-2-C-methyl-D-erythritol from CTP and 2-C-methyl-D-erythritol 4-phosphate (MEP). This is 2-C-methyl-D-erythritol 4-phosphate cytidylyltransferase from Pseudomonas entomophila (strain L48).